The primary structure comprises 1503 residues: Chromosome partition protein MukB (1503 aa).

The span at 1-19 shows a compositional bias: polar residues; that stretch reads MMNTNELFDQTAVNSSQDK. Residues 1-21 are disordered; sequence MMNTNELFDQTAVNSSQDKPL. Position 65–72 (65–72) interacts with ATP; the sequence is GGNGAGKS. Coiled-coil stretches lie at residues 370-495, 536-616, 662-697, 865-1173, and 1238-1293; these read MNAL…QRLS, DQKM…HRQQ, MQEM…SQAD, EMLM…SAEE, and DAIE…LQNI. Residues 696-813 are flexible hinge; sequence ADGAEDIRLN…EVPLFGRAAR (118 aa).

Belongs to the SMC family. MukB subfamily. Homodimerization via its hinge domain. Binds to DNA via its C-terminal region. Interacts, and probably forms a ternary complex, with MukE and MukF via its C-terminal region. The complex formation is stimulated by calcium or magnesium. Interacts with tubulin-related protein FtsZ.

It localises to the cytoplasm. The protein resides in the nucleoid. Plays a central role in chromosome condensation, segregation and cell cycle progression. Functions as a homodimer, which is essential for chromosome partition. Involved in negative DNA supercoiling in vivo, and by this means organize and compact chromosomes. May achieve or facilitate chromosome segregation by condensation DNA from both sides of a centrally located replisome during cell division. The polypeptide is Chromosome partition protein MukB (Haemophilus ducreyi (strain 35000HP / ATCC 700724)).